The sequence spans 324 residues: NAC domain-containing protein 21/22 (324 aa).

The 153-residue stretch at 19–171 (LPPGFRFHPK…DWVLCRVFHK (153 aa)) folds into the NAC domain. A Bipartite nuclear localization signal motif is present at residues 120-137 (RKTLVFYQGRAPRGRKTD).

As to quaternary structure, dimer. Interacts with SINAT5. In terms of processing, ubiquitinated. The interaction with SINAT5 mediate its proteasome-dependent degradation. In terms of tissue distribution, predominantly expressed in the root tip and in lateral root initiation sites. Also detected in expanding cotyledon, and in leaf primordia.

Its subcellular location is the nucleus. Transcriptional activator that mediates auxin signaling to promote lateral root development. Activates the expression of two downstream auxin-responsive genes, DBP and AIR3. This Arabidopsis thaliana (Mouse-ear cress) protein is NAC domain-containing protein 21/22 (NAC021).